Reading from the N-terminus, the 721-residue chain is Glucans biosynthesis glucosyltransferase H (721 aa).

Helical transmembrane passes span 53–75 (VLIM…QVLQ), 85–107 (VVLV…ALAG), 404–426 (GIGA…LISL), 456–478 (WVFA…LVLI), 490–512 (LRTF…VMMV), and 567–589 (WPLL…VALL).

This sequence belongs to the glycosyltransferase 2 family. OpgH subfamily.

It is found in the cell inner membrane. The protein operates within glycan metabolism; osmoregulated periplasmic glucan (OPG) biosynthesis. Functionally, involved in the biosynthesis of osmoregulated periplasmic glucans (OPGs). The polypeptide is Glucans biosynthesis glucosyltransferase H (Rhodopseudomonas palustris (strain ATCC BAA-98 / CGA009)).